We begin with the raw amino-acid sequence, 606 residues long: V-type proton ATPase catalytic subunit A (606 aa).

Position 2 is an N-acetylalanine (alanine 2). 240 to 247 contributes to the ATP binding site; that stretch reads AFGCGKTV.

It belongs to the ATPase alpha/beta chains family. V-ATPase is a heteromultimeric enzyme made up of two complexes: the ATP-hydrolytic V1 complex and the proton translocation V0 complex. The V1 complex consists of three catalytic AB heterodimers that form a heterohexamer, three peripheral stalks each consisting of EG heterodimers, one central rotor including subunits D and F, and the regulatory subunits C and H. The proton translocation complex V0 consists of the proton transport subunit a, a ring of proteolipid subunits c9c'', rotary subunit d, subunits e and f, and the accessory subunits vah-19/Ac45 and vah-20/PRR. As to expression, expressed in proximal but not distal germ cells.

It catalyses the reaction ATP + H2O + 4 H(+)(in) = ADP + phosphate + 5 H(+)(out). With respect to regulation, ATP hydrolysis occurs at the interface between the nucleotide-binding domains of subunits A and B. ATP hydrolysis triggers a conformational change in the subunits D and F, which induces a shift of subunit d. The c-ring is subsequently rotated and results in a continuous proton translocation across the membrane. Functionally, catalytic subunit of the V1 complex of vacuolar(H+)-ATPase (V-ATPase), a multisubunit enzyme composed of a peripheral complex (V1) that hydrolyzes ATP and a membrane integral complex (V0) that translocates protons. V-ATPase is responsible for acidifying and maintaining the pH of intracellular compartments and in some cell types, is targeted to the plasma membrane, where it is responsible for acidifying the extracellular environment. Required along with other vacuolar ATPase components for the removal of protein aggregates which form in immature oocytes in the distal gonad. This removal occurs as the oocytes mature and move to the proximal gonad, is triggered by the introduction of sperm through mating and occurs before fertilization. The introduction of sperm triggers V-ATPase accumulation in proximal oocytes and induces lysosomal acidification which leads to engulfing of protein aggregates by lysosomes and subsequent clearance of the aggregates. Lysosomal acidification also leads to changes in mitochondrial morphology and function. Mitochondria in distal immature oocytes are fragmented, produce high levels of reactive oxygen species (ROS) and have high membrane potential, indicative of metabolic inactivity. In contrast, mitochondria in proximal mature oocytes are tubular with lower ROS levels and membrane potential, indicative of an active metabolic state required for aggregate mobilization before clearance. Involved in receptor-mediated endocytosis. The chain is V-type proton ATPase catalytic subunit A from Caenorhabditis elegans.